The sequence spans 558 residues: uncharacterized protein (558 aa).

Over residues 338–354 (STSTSTSTSTSSSNDLN) the composition is skewed to low complexity. The tract at residues 338–380 (STSTSTSTSTSSSNDLNLDSDSDDSDSDDSDSDSDSDSDSEID) is disordered. Over residues 355–380 (LDSDSDDSDSDDSDSDSDSDSDSEID) the composition is skewed to acidic residues.

Its subcellular location is the plastid. This is an uncharacterized protein from Euglena longa (Euglenophycean alga).